The chain runs to 281 residues: Pantothenate synthetase (281 aa).

Met-30–His-37 serves as a coordination point for ATP. His-37 functions as the Proton donor in the catalytic mechanism. (R)-pantoate is bound at residue Gln-61. Gln-61 is a binding site for beta-alanine. Residue Gly-147–Asp-150 coordinates ATP. Residue Gln-153 coordinates (R)-pantoate. ATP-binding positions include Ile-176 and Lys-184–Arg-187.

Belongs to the pantothenate synthetase family. Homodimer.

The protein localises to the cytoplasm. It catalyses the reaction (R)-pantoate + beta-alanine + ATP = (R)-pantothenate + AMP + diphosphate + H(+). It functions in the pathway cofactor biosynthesis; (R)-pantothenate biosynthesis; (R)-pantothenate from (R)-pantoate and beta-alanine: step 1/1. Catalyzes the condensation of pantoate with beta-alanine in an ATP-dependent reaction via a pantoyl-adenylate intermediate. This Clostridium botulinum (strain Kyoto / Type A2) protein is Pantothenate synthetase.